The primary structure comprises 62 residues: Large ribosomal subunit protein bL28 (62 aa).

The protein belongs to the bacterial ribosomal protein bL28 family.

This chain is Large ribosomal subunit protein bL28, found in Helicobacter hepaticus (strain ATCC 51449 / 3B1).